The sequence spans 361 residues: Histidinol-phosphate aminotransferase (361 aa).

Lys-219 carries the post-translational modification N6-(pyridoxal phosphate)lysine.

The protein belongs to the class-II pyridoxal-phosphate-dependent aminotransferase family. Histidinol-phosphate aminotransferase subfamily. Homodimer. The cofactor is pyridoxal 5'-phosphate.

It catalyses the reaction L-histidinol phosphate + 2-oxoglutarate = 3-(imidazol-4-yl)-2-oxopropyl phosphate + L-glutamate. The protein operates within amino-acid biosynthesis; L-histidine biosynthesis; L-histidine from 5-phospho-alpha-D-ribose 1-diphosphate: step 7/9. This is Histidinol-phosphate aminotransferase from Cereibacter sphaeroides (strain KD131 / KCTC 12085) (Rhodobacter sphaeroides).